Consider the following 128-residue polypeptide: Large ribosomal subunit protein bL17 (128 aa).

Belongs to the bacterial ribosomal protein bL17 family. As to quaternary structure, part of the 50S ribosomal subunit. Contacts protein L32.

This Streptococcus pneumoniae serotype 4 (strain ATCC BAA-334 / TIGR4) protein is Large ribosomal subunit protein bL17.